The following is a 367-amino-acid chain: Putative isomerase YraM (367 aa).

The protein belongs to the PrpF family.

This Bacillus subtilis (strain 168) protein is Putative isomerase YraM (yraM).